The sequence spans 531 residues: High affinity cysteine transporter (531 aa).

Residues M1–K54 are Cytoplasmic-facing. A helical transmembrane segment spans residues L55–A75. Over T76–N97 the chain is Lumenal. The helical transmembrane segment at T98 to A118 threads the bilayer. Residues Q119–K120 lie on the Cytoplasmic side of the membrane. A helical membrane pass occupies residues L121–S141. Topologically, residues C142 to R154 are lumenal. Residue N146 is glycosylated (N-linked (GlcNAc...) asparagine). A helical transmembrane segment spans residues F155–F175. The Cytoplasmic segment spans residues F176 to P186. The chain crosses the membrane as a helical span at residues F187–L207. The Lumenal portion of the chain corresponds to H208–K218. The helical transmembrane segment at I219 to F239 threads the bilayer. Over P240–D285 the chain is Cytoplasmic. Residues Y286–Y306 traverse the membrane as a helical segment. Topologically, residues Q307–T324 are lumenal. The chain crosses the membrane as a helical span at residues L325–L345. Over A346–S352 the chain is Cytoplasmic. Residues A353 to L373 traverse the membrane as a helical segment. The Lumenal portion of the chain corresponds to P374–K378. A helical membrane pass occupies residues I379 to A399. Over L400–K413 the chain is Cytoplasmic. Residues L414–R436 traverse the membrane as a helical segment. The Lumenal portion of the chain corresponds to E437 to W447. A helical transmembrane segment spans residues I448–I468. Residues L469 to N498 are a coiled coil. Topologically, residues L469 to L531 are cytoplasmic. 2 positions are modified to phosphoserine: S500 and S501.

It belongs to the major facilitator superfamily. Allantoate permease family.

Its subcellular location is the cell membrane. It localises to the endoplasmic reticulum membrane. High affinity cysteine-specific transporter. Major contributor to cysteine transport when cysteine, at low concentrations, is provided as the sole sulfur source. This Saccharomyces cerevisiae (strain ATCC 204508 / S288c) (Baker's yeast) protein is High affinity cysteine transporter (YCT1).